A 279-amino-acid polypeptide reads, in one-letter code: Urease accessory protein UreD (279 aa).

Belongs to the UreD family. UreD, UreF and UreG form a complex that acts as a GTP-hydrolysis-dependent molecular chaperone, activating the urease apoprotein by helping to assemble the nickel containing metallocenter of UreC. The UreE protein probably delivers the nickel.

It localises to the cytoplasm. Required for maturation of urease via the functional incorporation of the urease nickel metallocenter. This chain is Urease accessory protein UreD, found in Trichormus variabilis (strain ATCC 29413 / PCC 7937) (Anabaena variabilis).